A 786-amino-acid chain; its full sequence is Calcium-independent phospholipase A2-gamma (786 aa).

N-linked (GlcNAc...) asparagine glycosylation occurs at asparagine 4. 3 disordered regions span residues lysine 158–lysine 180, lysine 225–isoleucine 285, and serine 321–lysine 348. Over residues lysine 225 to lysine 245 the composition is skewed to basic and acidic residues. Polar residues-rich tracts occupy residues serine 246 to alanine 258 and serine 266 to isoleucine 285. The PNPLA domain occupies leucine 449–methionine 644. Residues glycine 453–glycine 458 carry the GXGXXG motif. A helical transmembrane segment spans residues isoleucine 483–leucine 503. The short motif at glycine 485–glycine 489 is the GXSXG element. The active-site Nucleophile is the serine 487. Residue aspartate 631 is the Proton acceptor of the active site. Positions aspartate 631–glycine 633 match the DGA/G motif. The residue at position 740 (lysine 740) is an N6-succinyllysine.

In terms of tissue distribution, expressed in kidney, heart and brain.

The protein resides in the endoplasmic reticulum membrane. It is found in the mitochondrion membrane. It localises to the peroxisome membrane. It carries out the reaction a 1,2-diacyl-sn-glycero-3-phosphocholine + H2O = a 1-acyl-sn-glycero-3-phosphocholine + a fatty acid + H(+). The catalysed reaction is a 1,2-diacyl-sn-glycero-3-phosphocholine + H2O = a 2-acyl-sn-glycero-3-phosphocholine + a fatty acid + H(+). It catalyses the reaction a 1,2-diacyl-sn-glycero-3-phosphoethanolamine + H2O = a 1-acyl-sn-glycero-3-phosphoethanolamine + a fatty acid + H(+). The enzyme catalyses a 1-O-(1Z-alkenyl)-2-acyl-sn-glycero-3-phosphocholine + H2O = a 1-O-(1Z-alkenyl)-sn-glycero-3-phosphocholine + a fatty acid + H(+). It carries out the reaction a 1-acyl-sn-glycero-3-phosphocholine + H2O = sn-glycerol 3-phosphocholine + a fatty acid + H(+). The catalysed reaction is 1-acyl-2-(9Z,12Z)-octadecadienoyl-sn-glycero-3-phosphocholine + H2O = a 1-acyl-sn-glycero-3-phosphocholine + (9Z,12Z)-octadecadienoate + H(+). It catalyses the reaction 1-acyl-2-(5Z,8Z,11Z,14Z-eicosatetraenoyl)-sn-glycero-3-phosphocholine + H2O = a 1-acyl-sn-glycero-3-phosphocholine + (5Z,8Z,11Z,14Z)-eicosatetraenoate + H(+). The enzyme catalyses 1-hexadecanoyl-2-(5Z,8Z,11Z,14Z-eicosatetraenoyl)-sn-glycero-3-phosphocholine + H2O = 1-hexadecanoyl-sn-glycero-3-phosphocholine + (5Z,8Z,11Z,14Z)-eicosatetraenoate + H(+). It carries out the reaction 1-octadecanoyl-2-(9Z-octadecenoyl)-sn-glycero-3-phosphocholine + H2O = 1-octadecanoyl-sn-glycero-3-phosphocholine + (9Z)-octadecenoate + H(+). The catalysed reaction is 1-hexadecanoyl-2-(9Z-octadecenoyl)-sn-glycero-3-phosphocholine + H2O = 1-hexadecanoyl-sn-glycero-3-phosphocholine + (9Z)-octadecenoate + H(+). It catalyses the reaction 1-hexadecanoyl-2-(9Z,12Z-octadecadienoyl)-sn-glycero-3-phosphocholine + H2O = (9Z,12Z)-octadecadienoate + 1-hexadecanoyl-sn-glycero-3-phosphocholine + H(+). The enzyme catalyses 1-acyl-2-(9Z,12Z)-octadecadienoyl-sn-glycero-3-phosphoethanolamine + H2O = a 1-acyl-sn-glycero-3-phosphoethanolamine + (9Z,12Z)-octadecadienoate + H(+). It carries out the reaction 1-acyl-2-(5Z,8Z,11Z,14Z)-eicosatetraenoyl-sn-glycero-3-phosphoethanolamine + H2O = a 1-acyl-sn-glycero-3-phosphoethanolamine + (5Z,8Z,11Z,14Z)-eicosatetraenoate + H(+). The catalysed reaction is 1-hexadecanoyl-2-(5Z,8Z,11Z,14Z-eicosatetraenoyl)-sn-glycero-3-phosphoethanolamine + H2O = 1-hexadecanoyl-sn-glycero-3-phosphoethanolamine + (5Z,8Z,11Z,14Z)-eicosatetraenoate + H(+). It catalyses the reaction 1-hexadecanoyl-2-(5Z,8Z,11Z,14Z-eicosatetraenoyl)-sn-glycero-3-phosphocholine + H2O = 2-(5Z,8Z,11Z,14Z)-eicosatetraenoyl-sn-glycero-3-phosphocholine + hexadecanoate + H(+). The enzyme catalyses 1-octadecanoyl-2-(9Z-octadecenoyl)-sn-glycero-3-phosphocholine + H2O = 2-(9Z-octadecenoyl)-sn-glycero-3-phosphocholine + octadecanoate + H(+). It carries out the reaction 1-hexadecanoyl-2-(4Z,7Z,10Z,13Z,16Z,19Z-docosahexaenoyl)-sn-glycero-3-phosphocholine + H2O = 2-(4Z,7Z,10Z,13Z,16Z,19Z-docosahexaenoyl)-sn-glycero-3-phosphocholine + hexadecanoate + H(+). The catalysed reaction is 1-O-(1Z)-hexadecenyl-2 (5Z,8Z,11Z,14Z)-eicosatetraenoyl-sn-glycero-3-phosphocholine + H2O = 1-(1Z-hexadecenyl)-sn-glycero-3-phosphocholine + (5Z,8Z,11Z,14Z)-eicosatetraenoate + H(+). It catalyses the reaction 1-O-(1Z-hexadecenyl)-2-(9Z-octadecenoyl)-sn-glycero-3-phosphocholine + H2O = 1-(1Z-hexadecenyl)-sn-glycero-3-phosphocholine + (9Z)-octadecenoate + H(+). The enzyme catalyses 1-hexadecanoyl-sn-glycero-3-phosphocholine + H2O = sn-glycerol 3-phosphocholine + hexadecanoate + H(+). It carries out the reaction 1',3'-bis-[1,2-di-(9Z,12Z-octadecadienoyl)-sn-glycero-3-phospho]-glycerol + H2O = 1'-[1,2-di-(9Z,12Z-octadecadienoyl)-sn-glycero-3-phospho]-3'-[1-(9Z,12Z-octadecadienoyl)-sn-glycero-3-phospho]-glycerol + (9Z,12Z)-octadecadienoate + H(+). The catalysed reaction is 1'-[1-acyl-2-(9-hydroxy-(10E,12Z)-octadecadienoyl)-sn-glycero-3-phospho]-3'-[1,2-diacyl-sn-glycero-3-phospho]-glycerol + H2O = 9-hydroxy-(10E,12Z)-octadecadienoate + 1'-[1,2-diacyl-sn-glycero-3-phospho],3'-[1-acyl-sn-glycero-3-phospho]-glycerol + H(+). It functions in the pathway phospholipid metabolism. With respect to regulation, calcium-independent phospholipase. Its function is as follows. Calcium-independent and membrane-bound phospholipase, that catalyzes the esterolytic cleavage of fatty acids from glycerophospholipids to yield free fatty acids and lysophospholipids, hence regulating membrane physical properties and the release of lipid second messengers and growth factors. Hydrolyzes phosphatidylethanolamine, phosphatidylcholine and probably phosphatidylinositol with a possible preference for the former. Has also a broad substrate specificity in terms of fatty acid moieties, hydrolyzing saturated and mono-unsaturated fatty acids at nearly equal rates from either the sn-1 or sn-2 position in diacyl phosphatidylcholine. However, has a weak activity toward polyunsaturated fatty acids at the sn-2 position, and thereby favors the production of 2-arachidonoyl lysophosphatidylcholine, a key branch point metabolite in eicosanoid signaling. On the other hand, can produce arachidonic acid from the sn-1 position of diacyl phospholipid and from the sn-2 position of arachidonate-containing plasmalogen substrates. Therefore, plays an important role in the mobilization of arachidonic acid in response to cellular stimuli and the generation of lipid second messengers. Can also hydrolyze lysophosphatidylcholine. In the mitochondrial compartment, catalyzes the hydrolysis and release of oxidized aliphatic chains from cardiolipin and integrates mitochondrial bioenergetics and signaling. It is essential for maintaining efficient bioenergetic mitochondrial function through tailoring mitochondrial membrane lipid metabolism and composition. The chain is Calcium-independent phospholipase A2-gamma from Oryctolagus cuniculus (Rabbit).